We begin with the raw amino-acid sequence, 290 residues long: Potassium-transporting ATPase subunit beta (290 aa).

The Cytoplasmic segment spans residues 1–36 (MAALQEKKSCSQRMEEFQRYCWNPDTGQMLGRTLSR). Residues 37–57 (WVWISLYYVAFYVVMTGIFAL) traverse the membrane as a helical; Signal-anchor for type II membrane protein segment. Over 58 to 290 (CIYTLMCTLD…KVEFKLTIQQ (233 aa)) the chain is Extracellular. 5 N-linked (GlcNAc...) asparagine glycosylation sites follow: Asn99, Asn103, Asn130, Asn146, and Asn161. Cysteines 131 and 152 form a disulfide. Cysteines 162 and 178 form a disulfide. N-linked (GlcNAc...) asparagine glycosylation is found at Asn193 and Asn221. Residues 194-290 (STAPRADCTF…KVEFKLTIQQ (97 aa)) are immunoglobulin-like. Cys201 and Cys262 are joined by a disulfide.

It belongs to the X(+)/potassium ATPases subunit beta family. As to quaternary structure, the ATPase pump is composed of two subunits: alpha (catalytic) and beta (regulatory). Interacts with alpha subunit ATP12A; this interaction is required for the formation of a functionally active pump and targeting at the plasma membrane. Interacts (via N-terminus) with alpha subunit ATP4A (via the P-domain). Post-translationally, N-glycosylation is necessary for assembly and functional expression of the pump at the plasma membrane.

The protein resides in the apical cell membrane. The protein localises to the cell membrane. Functionally, the beta subunit of the gastric H(+)/K(+) ATPase pump which transports H(+) ions in exchange for K(+) ions across the apical membrane of parietal cells. Plays a structural and regulatory role in the assembly and membrane targeting of a functionally active pump. Within a transport cycle, the transfer of a H(+) ion across the membrane is coupled to ATP hydrolysis and is associated with a transient phosphorylation of the alpha subunit that shifts the pump conformation from inward-facing (E1) to outward-facing state (E2). Interacts with the phosphorylation domain of the alpha subunit and functions as a ratchet, stabilizing the lumenal-open E2 conformation and preventing the reverse reaction of the transport cycle. This Canis lupus familiaris (Dog) protein is Potassium-transporting ATPase subunit beta (ATP4B).